We begin with the raw amino-acid sequence, 626 residues long: Procollagen galactosyltransferase 2 (626 aa).

An N-terminal signal peptide occupies residues 1-27 (MAARPAATLAWSLLLLSSALLREGCRA). 4 N-linked (GlcNAc...) asparagine glycosylation sites follow: Asn-97, Asn-185, Asn-382, and Asn-580. A disordered region spans residues 604 to 626 (NAKNTEALPPPTSLDTVPSRDEL). Residues 623–626 (RDEL) carry the Prevents secretion from ER motif.

This sequence belongs to the glycosyltransferase 25 family. As to expression, expressed in brain and skeletal muscle.

It is found in the endoplasmic reticulum lumen. The catalysed reaction is (5R)-5-hydroxy-L-lysyl-[collagen] + UDP-alpha-D-galactose = (5R)-5-O-(beta-D-galactosyl)-5-hydroxy-L-lysyl-[collagen] + UDP + H(+). In terms of biological role, beta-galactosyltransferase that transfers beta-galactose to hydroxylysine residues of collagen. This chain is Procollagen galactosyltransferase 2 (COLGALT2), found in Homo sapiens (Human).